The following is a 196-amino-acid chain: Phosphoheptose isomerase (196 aa).

Residues 36–196 form the SIS domain; the sequence is MTNCLINGGK…GIDALLLGVE (161 aa). 51 to 53 contacts substrate; it reads NGG. 2 residues coordinate Zn(2+): histidine 60 and glutamate 64. Substrate contacts are provided by residues glutamate 64, 93-94, 119-121, serine 124, and glutamine 174; these read ND and STS. Glutamine 174 and histidine 182 together coordinate Zn(2+).

Belongs to the SIS family. GmhA subfamily. As to quaternary structure, homotetramer. Zn(2+) is required as a cofactor.

Its subcellular location is the cytoplasm. It carries out the reaction 2 D-sedoheptulose 7-phosphate = D-glycero-alpha-D-manno-heptose 7-phosphate + D-glycero-beta-D-manno-heptose 7-phosphate. It participates in carbohydrate biosynthesis; D-glycero-D-manno-heptose 7-phosphate biosynthesis; D-glycero-alpha-D-manno-heptose 7-phosphate and D-glycero-beta-D-manno-heptose 7-phosphate from sedoheptulose 7-phosphate: step 1/1. In terms of biological role, catalyzes the isomerization of sedoheptulose 7-phosphate in D-glycero-D-manno-heptose 7-phosphate. In Dechloromonas aromatica (strain RCB), this protein is Phosphoheptose isomerase.